The primary structure comprises 281 residues: Large ribosomal subunit protein uL2 (281 aa).

The interval 224-281 (RGSAMNPNDHPHGGGEGHQPIGRKSPMTPWGKKALGVKTRKTKKASNQFIIRRRKESK) is disordered.

This sequence belongs to the universal ribosomal protein uL2 family. In terms of assembly, part of the 50S ribosomal subunit. Forms a bridge to the 30S subunit in the 70S ribosome.

Its function is as follows. One of the primary rRNA binding proteins. Required for association of the 30S and 50S subunits to form the 70S ribosome, for tRNA binding and peptide bond formation. It has been suggested to have peptidyltransferase activity; this is somewhat controversial. Makes several contacts with the 16S rRNA in the 70S ribosome. The protein is Large ribosomal subunit protein uL2 of Metamycoplasma arthritidis (strain 158L3-1) (Mycoplasma arthritidis).